A 248-amino-acid polypeptide reads, in one-letter code: MSSDKANNQSPDQGANTPAESTNSGPKLDGNQAVNLAAEQSKSTADKNLPVFGDLPIPEDTANLRFGPNLHDGLLALLPLVGVWRGQGQAAHPGEEEFTFGQQLSIFHDGENRLGFESRTWKINPPAEEGAEADGDEASAESAGEPEVGELLRREAGFWRIDNDDNIELLIAHSDGMIELMYGKPLTERAWQLESASTLATETGPSALGPGKRLYGLMPNNDLGWVDERLIDGEMVPWMSAQLKRVRG.

2 stretches are compositionally biased toward polar residues: residues 1–25 (MSSDKANNQSPDQGANTPAESTNSG) and 32–43 (QAVNLAAEQSKS). Positions 1–49 (MSSDKANNQSPDQGANTPAESTNSGPKLDGNQAVNLAAEQSKSTADKNL) are disordered. A GXWXGXG motif is present at residues 82–88 (GVWRGQG). The disordered stretch occupies residues 118 to 147 (SRTWKINPPAEEGAEADGDEASAESAGEPE). Over residues 129-139 (EGAEADGDEAS) the composition is skewed to acidic residues.

This sequence belongs to the nitrobindin family.

The protein is Ferric nitrobindin-like protein of Corynebacterium urealyticum (strain ATCC 43042 / DSM 7109).